The sequence spans 184 residues: Protein DMP2 (184 aa).

The next 4 membrane-spanning stretches (helical) occupy residues leucine 19–threonine 39, leucine 45–phenylalanine 65, valine 105–aspartate 125, and isoleucine 142–phenylalanine 162.

This sequence belongs to the plant DMP1 protein family. Expressed constitutively in leaves, stems, flowers, siliques and roots.

It is found in the endoplasmic reticulum membrane. The protein resides in the vacuole membrane. Its function is as follows. Involved in membrane remodeling. This is Protein DMP2 from Arabidopsis thaliana (Mouse-ear cress).